Here is a 438-residue protein sequence, read N- to C-terminus: GTPase Der (438 aa).

2 EngA-type G domains span residues 4-168 (PIVA…PKGY) and 177-352 (IRIA…TNYS). Residues 10–17 (GRPNVGKS), 57–61 (DTGGI), 120–123 (NKID), 183–190 (GKPNVGKS), 230–234 (DTAGL), and 295–298 (NKWD) each bind GTP. Positions 353–437 (KRISTGVLND…GIKMEFRERK (85 aa)) constitute a KH-like domain.

It belongs to the TRAFAC class TrmE-Era-EngA-EngB-Septin-like GTPase superfamily. EngA (Der) GTPase family. Associates with the 50S ribosomal subunit.

GTPase that plays an essential role in the late steps of ribosome biogenesis. The polypeptide is GTPase Der (Clostridium tetani (strain Massachusetts / E88)).